A 586-amino-acid chain; its full sequence is Membrane protein insertase YidC (586 aa).

A run of 5 helical transmembrane segments spans residues 5–25 (TLIG…LMAP), 371–391 (GVII…LTMA), 436–456 (LGGC…FYVF), 486–506 (IPLY…AVFF), and 522–542 (FMMY…PSGL).

It belongs to the OXA1/ALB3/YidC family. Type 1 subfamily. As to quaternary structure, interacts with the Sec translocase complex via SecD. Specifically interacts with transmembrane segments of nascent integral membrane proteins during membrane integration.

Its subcellular location is the cell inner membrane. In terms of biological role, required for the insertion and/or proper folding and/or complex formation of integral membrane proteins into the membrane. Involved in integration of membrane proteins that insert both dependently and independently of the Sec translocase complex, as well as at least some lipoproteins. Aids folding of multispanning membrane proteins. The sequence is that of Membrane protein insertase YidC from Chloroherpeton thalassium (strain ATCC 35110 / GB-78).